A 106-amino-acid polypeptide reads, in one-letter code: U1-lycotoxin-Ls1b (106 aa).

The N-terminal stretch at 1 to 19 is a signal peptide; it reads MKVLVVVALLVTLISYSSS. Residues 20–40 constitute a propeptide that is removed on maturation; it reads EGIDDPEADELLSLMANEQTR. 4 cysteine pairs are disulfide-bonded: Cys-43–Cys-58, Cys-50–Cys-67, Cys-57–Cys-85, and Cys-69–Cys-83.

This sequence belongs to the neurotoxin 19 (CSTX) family. 04 (U1-Lctx) subfamily. As to expression, expressed by the venom gland.

It is found in the secreted. This is U1-lycotoxin-Ls1b from Lycosa singoriensis (Wolf spider).